The following is a 342-amino-acid chain: uncharacterized protein (342 aa).

The protein belongs to the cycloisomerase 2 family.

This is an uncharacterized protein from Staphylococcus aureus (strain bovine RF122 / ET3-1).